A 644-amino-acid polypeptide reads, in one-letter code: MAKIIGIDLGTTNSCVAVMEGDKPKVIENSEGHRTTPSIVAFTDDNEILVGQSAKRQSVTNPEKTLFAIKRLIGRRFDDPIVQKDIKMVPYKIMKADNGDAWVRVKDQDKAPPQISAEVLRKMKKTAEDYLGEEVKEAVITVPAYFNDSQRQATKDAGRIAGLEVKRIINEPTAAALAYGMDKKRGDSVIAVYDLGGGTFDISIIEIAEVDGEHQFEVLATNGDTFLGGEDFDLALIEYLASEFKKDTGIDLHNDPLALQRLKEAAEKAKIELSSAQQTDVNLPYITADASGPKHLNIKLTRAKLESLVEKLVERTIEPCKTALKDAGLTVSQINEVILVGGQTRMPLVQKTVEEFFGKEPRKDVNPDEAVAVGAAIQAAVLSGEVKDILLLDVTPLSLGIETMGGVMTKLIEKNTTIPTKATQVFSTADDNQTAVTVHVLQGEREQASANKSLGRFDLRDIPPAPRGVPQIEVTFDIDANGILNVSAKDKATGKAQSIVIKASSGLSEEEVAAMVKDAQSHAEEDKKFKEMAELRNQADSLIHSCEKSMKDLADELSEDEKKGIETAISELKEAVQGTDKTRIEDKLKVLTDASAKMAERIYAKKSSEGQAAQGQTQSQESTKPVEEGVVDAEFEEVKEEDKK.

Residue Thr199 is modified to Phosphothreonine; by autocatalysis. Residues 605 to 644 (KKSSEGQAAQGQTQSQESTKPVEEGVVDAEFEEVKEEDKK) form a disordered region. Residues 609–623 (EGQAAQGQTQSQEST) show a composition bias toward polar residues. Residues 629–644 (GVVDAEFEEVKEEDKK) show a composition bias toward acidic residues.

It belongs to the heat shock protein 70 family.

Its function is as follows. Acts as a chaperone. The chain is Chaperone protein DnaK from Legionella pneumophila (strain Paris).